The primary structure comprises 181 residues: Cytochrome c oxidase subunit 2 (181 aa).

Cys126, Glu128, Cys130, His134, and Met137 together coordinate Cu cation. Glu128 contacts Mg(2+).

Belongs to the cytochrome c oxidase subunit 2 family. Component of the cytochrome c oxidase (complex IV, CIV), a multisubunit enzyme composed of a catalytic core of 3 subunits and several supernumerary subunits. The complex exists as a monomer or a dimer and forms supercomplexes (SCs) in the inner mitochondrial membrane with ubiquinol-cytochrome c oxidoreductase (cytochrome b-c1 complex, complex III, CIII). Cu cation serves as cofactor.

It is found in the mitochondrion inner membrane. It carries out the reaction 4 Fe(II)-[cytochrome c] + O2 + 8 H(+)(in) = 4 Fe(III)-[cytochrome c] + 2 H2O + 4 H(+)(out). Its function is as follows. Component of the cytochrome c oxidase, the last enzyme in the mitochondrial electron transport chain which drives oxidative phosphorylation. The respiratory chain contains 3 multisubunit complexes succinate dehydrogenase (complex II, CII), ubiquinol-cytochrome c oxidoreductase (cytochrome b-c1 complex, complex III, CIII) and cytochrome c oxidase (complex IV, CIV), that cooperate to transfer electrons derived from NADH and succinate to molecular oxygen, creating an electrochemical gradient over the inner membrane that drives transmembrane transport and the ATP synthase. Cytochrome c oxidase is the component of the respiratory chain that catalyzes the reduction of oxygen to water. Electrons originating from reduced cytochrome c in the intermembrane space (IMS) are transferred via the dinuclear copper A center (CU(A)) of subunit 2 and heme A of subunit 1 to the active site in subunit 1, a binuclear center (BNC) formed by heme A3 and copper B (CU(B)). The BNC reduces molecular oxygen to 2 water molecules using 4 electrons from cytochrome c in the IMS and 4 protons from the mitochondrial matrix. This chain is Cytochrome c oxidase subunit 2 (COII), found in Paramecium primaurelia.